A 663-amino-acid polypeptide reads, in one-letter code: Forkhead protein sep1 (663 aa).

Positions 128–222 (KPPYSYAMLI…LKLKLRKPGV (95 aa)) form a DNA-binding region, fork-head. 2 disordered regions span residues 220 to 241 (PGVN…KYGS) and 325 to 387 (SPLQ…DVET). Low complexity predominate over residues 340 to 355 (SPASSASPSESLRNES). The residue at position 446 (S446) is a Phosphoserine.

It is found in the nucleus. Required for promoter sequence element PCB-driven, M-phase-specific transcription. Acts as a transcriptional activator with a role in the regulation of mitosis. Regulates septation and the periodic transcription of cdc15. The protein is Forkhead protein sep1 (sep1) of Schizosaccharomyces pombe (strain 972 / ATCC 24843) (Fission yeast).